A 327-amino-acid polypeptide reads, in one-letter code: Microtubule-associated protein RP/EB family member 2 (327 aa).

A disordered region spans residues 1-21 (MPGPTQTLSPNGENNNDIIQD). S9 carries the post-translational modification Phosphoserine. Residues 57–159 (TMSRHDIIAW…FIQWFKKFYD (103 aa)) enclose the Calponin-homology (CH) domain. Residue Y167 is modified to Phosphotyrosine. Disordered stretches follow at residues 171 to 240 (EARQ…DKDL) and 299 to 327 (ASEE…QEEY). Positions 187 to 327 (QIFNLPKKSH…EQQPPQQEEY (141 aa)) are DCTN1-binding. A compositionally biased stretch (low complexity) spans 200-234 (SPTAGAAKSSPAAKPGSTPSRPSSAKRASSSGSAS). S219 bears the Phosphoserine mark. The region spanning 236-306 (SDKDLETQVI…LYASEEHEGH (71 aa)) is the EB1 C-terminal domain. Residues 259 to 302 (EGVEKERDFYFGKLREIELLCQEHGQENDDLVQRLMDVLYASEE) form an APC-binding region. The segment covering 300–317 (SEEHEGHTEEPEAEEQAH) has biased composition (basic and acidic residues). Low complexity predominate over residues 318–327 (EQQPPQQEEY).

This sequence belongs to the MAPRE family. As to quaternary structure, interacts with DCTN1. Interacts with APC (via C-terminal). Interacts with monomeric and polymerized tubulin. Interacts with SLAIN1. Interacts (via the N-terminal region) with BAG1.

The protein localises to the cytoplasm. It localises to the cytoskeleton. May be involved in microtubule polymerization, and spindle function by stabilizing microtubules and anchoring them at centrosomes. May play a role in cell migration. This Pongo abelii (Sumatran orangutan) protein is Microtubule-associated protein RP/EB family member 2 (MAPRE2).